A 139-amino-acid polypeptide reads, in one-letter code: mRNA stability protein mug134 (139 aa).

A disordered region spans residues 83–139 (IGKEIPSPDTIPHRVVSAGSPNKEPSLHTKRPSESSPSGASSRRESVTRHDLESNEN). Positions 124–139 (SRRESVTRHDLESNEN) are enriched in basic and acidic residues.

It belongs to the endosulfine family.

The protein resides in the nucleus. Its subcellular location is the cytoplasm. Its function is as follows. Plays an essential role in initiation of the G0 program by preventing the degradation of specific nutrient-regulated mRNAs via the 5'-3' mRNA decay pathway. The protein is mRNA stability protein mug134 (mug134) of Schizosaccharomyces pombe (strain 972 / ATCC 24843) (Fission yeast).